The following is a 30-amino-acid chain: Dicynthaurin (30 aa).

Threonine 30 is modified (threonine amide).

Homodimer.

It is found in the secreted. Functionally, shows antibacterial activity against both Gram-positive and Gram-negative bacteria. Its antimicrobial activity is optimal at NaCl concentrations below 100 mM, suggesting that the antimicrobial actions of this peptide may take place intracellularly rather than extracellularly. Has no activity against the fungus C.albicans. Has modest hemolytic activity. In Halocynthia aurantium (Sea peach), this protein is Dicynthaurin.